The sequence spans 2543 residues: Zinc finger FYVE domain-containing protein 26 (2543 aa).

The residue at position 297 (serine 297) is a Phosphoserine. 4 disordered regions span residues 523 to 545, 609 to 636, 699 to 722, and 744 to 820; these read ECRDSPSEDPALAAEPANDSLSS, GLLGLRSPSESPQHIAQPERKSEQGCQE, LSSHSPPEKPKLPEGQSCSGSRDG, and VTSN…GRLQ. 3 positions are modified to phosphoserine: serine 615, serine 619, and serine 703. Over residues 699 to 710 the composition is skewed to basic and acidic residues; sequence LSSHSPPEKPKL. Over residues 767–776 the composition is skewed to basic residues; the sequence is SLRRGRRTRR. The span at 786 to 806 shows a compositional bias: low complexity; the sequence is SNPSLESTSSELSTSTSEGSL. Position 802 is a phosphoserine (serine 802). Residues 870 to 897 adopt a coiled-coil conformation; that stretch reads MFMERYQEVIQELSRVEHKIENQNSDGG. Residues 1272-1299 form a disordered region; that stretch reads LSTLSSPKPTGNSTLERKPHSSPRDSSL. Polar residues predominate over residues 1273–1285; it reads STLSSPKPTGNST. Phosphoserine is present on residues serine 1744, serine 1765, serine 1784, and serine 1786. The interval 1780–1812 is disordered; it reads STIHSPSPRERSFPESQPPPEFVPPATPPGRPQ. Residues 1795-1810 show a composition bias toward pro residues; sequence SQPPPEFVPPATPPGR. The FYVE-type zinc finger occupies 1816–1876; sequence DESASICMVC…VCDQCYSYYN (61 aa). Zn(2+) contacts are provided by cysteine 1822, cysteine 1825, cysteine 1839, cysteine 1842, cysteine 1847, cysteine 1850, cysteine 1868, and cysteine 1871.

The protein belongs to the ZFYVE26 family. As to quaternary structure, interacts with AP5Z1, AP5B1, AP5S1 and SPG11. Interacts with TTC19 and KIF13A.

It is found in the cytoplasm. It localises to the cytoskeleton. The protein localises to the microtubule organizing center. Its subcellular location is the centrosome. The protein resides in the midbody. Functionally, phosphatidylinositol 3-phosphate-binding protein required for the abscission step in cytokinesis: recruited to the midbody during cytokinesis and acts as a regulator of abscission. May also be required for efficient homologous recombination DNA double-strand break repair. The protein is Zinc finger FYVE domain-containing protein 26 (ZFYVE26) of Ailuropoda melanoleuca (Giant panda).